Consider the following 118-residue polypeptide: Waprin-Enh1 (118 aa).

Positions 1–24 (MKTLTGLLLVGLLALWIGLPSTSS) are cleaved as a signal peptide. WAP domains follow at residues 25 to 72 (KILF…RSCR) and 74 to 118 (PPVL…RICK). Cystine bridges form between C30-C63, C40-C67, C50-C62, C56-C71, C81-C109, C88-C113, C96-C108, and C102-C117.

This sequence belongs to the venom waprin family. Expressed by the venom gland.

Its subcellular location is the secreted. Damages membranes of susceptible bacteria. Has no hemolytic activity. Not toxic to mice. Does not inhibit the proteinases elastase and cathepsin G. The polypeptide is Waprin-Enh1 (Pseudoferania polylepis (Macleay's water snake)).